The sequence spans 249 residues: Seipin homolog (249 aa).

Residues 1 to 10 (MGYLVKLFKL) lie on the Cytoplasmic side of the membrane. A helical membrane pass occupies residues 11-31 (VVWMLVIGLFSIPSLVSYVIF). Topologically, residues 32–212 (YDTVIPHSVI…GMRWFMYTHK (181 aa)) are lumenal. Residues 213 to 233 (VSAFLVFTSLFWFTGITSTII) form a helical membrane-spanning segment. Over 234 to 249 (TYLIVSSTSETKATRR) the chain is Cytoplasmic.

Belongs to the seipin family.

Its subcellular location is the endoplasmic reticulum membrane. Its function is as follows. Involved in lipid metabolism and lipid droplet (LD) morphology, number, and size. Facilitates initiation of LD formation, and ensures that vectorial budding of LDs from the ER is directed towards the cytoplasm. This chain is Seipin homolog, found in Schizosaccharomyces pombe (strain 972 / ATCC 24843) (Fission yeast).